The primary structure comprises 379 residues: Eukaryotic translation initiation factor 3 subunit H (379 aa).

The 154-residue stretch at 17-170 folds into the MPN domain; the sequence is VQIDSLVVMK…IRAYRLSTKA (154 aa). Residues 280–291 are compositionally biased toward basic and acidic residues; that stretch reads RQAENEQREARG. The tract at residues 280–300 is disordered; sequence RQAENEQREARGEPPLSFDDI.

It belongs to the eIF-3 subunit H family. In terms of assembly, component of the eukaryotic translation initiation factor 3 (eIF-3) complex.

It localises to the cytoplasm. Its function is as follows. Component of the eukaryotic translation initiation factor 3 (eIF-3) complex, which is involved in protein synthesis of a specialized repertoire of mRNAs and, together with other initiation factors, stimulates binding of mRNA and methionyl-tRNAi to the 40S ribosome. The eIF-3 complex specifically targets and initiates translation of a subset of mRNAs involved in cell proliferation. The polypeptide is Eukaryotic translation initiation factor 3 subunit H (Brugia malayi (Filarial nematode worm)).